Here is an 860-residue protein sequence, read N- to C-terminus: DNA mismatch repair protein MutS (860 aa).

Residue 620–627 (GPNMGGKS) participates in ATP binding.

Belongs to the DNA mismatch repair MutS family.

This protein is involved in the repair of mismatches in DNA. It is possible that it carries out the mismatch recognition step. This protein has a weak ATPase activity. This Dechloromonas aromatica (strain RCB) protein is DNA mismatch repair protein MutS.